The sequence spans 354 residues: Serum paraoxonase/lactonase 3 (354 aa).

Cys42 and Cys352 are oxidised to a cystine. Asn50 is a glycosylation site (N-linked (GlcNAc...) asparagine). Ca(2+) is bound by residues Glu53 and Asp54. The Proton acceptor role is filled by His114. Ile116 serves as a coordination point for Ca(2+). Ser165 bears the Phosphoserine mark. Positions 167, 168, 223, 268, and 269 each coordinate Ca(2+). N-linked (GlcNAc...) asparagine glycans are attached at residues Asn269 and Asn323.

It belongs to the paraoxonase family. In terms of assembly, homodimer. The cofactor is Ca(2+). In terms of processing, glycosylated. Post-translationally, the signal sequence is not cleaved.

The protein localises to the secreted. It is found in the extracellular space. The enzyme catalyses a phenyl acetate + H2O = a phenol + acetate + H(+). It carries out the reaction An aryl dialkyl phosphate + H2O = dialkyl phosphate + an aryl alcohol.. The catalysed reaction is an N-acyl-L-homoserine lactone + H2O = an N-acyl-L-homoserine + H(+). Its function is as follows. Has low activity towards the organophosphate paraxon and aromatic carboxylic acid esters. Rapidly hydrolyzes lactones such as statin prodrugs (e.g. lovastatin). Hydrolyzes aromatic lactones and 5- or 6-member ring lactones with aliphatic substituents but not simple lactones or those with polar substituents. The polypeptide is Serum paraoxonase/lactonase 3 (Pon3) (Mus musculus (Mouse)).